The primary structure comprises 530 residues: MEDDSLYLGGEWQFNHFSKLTSSRPDAAFAEIQRTSLPEKSPLSCETRVDLCDDLAPVARQLAPREKLPLSSRRPAAVGAGLQNMGNTCYVNASLQCLTYTPPLANYMLSREHSQTCHRHKGCMLCTMQAHITRALHNPGHVIQPSQALAAGFHRGKQEDAHEFLMFTVDAMKKACLPGHKQVDHHSKDTTLIHQIFGGYWRSQIKCLHCHGISDTFDPYLDIALDIQAAQSVQQALEQLVKPEELNGENAYHCGVCLQRAPASKTLTLHTSAKVLILVLKRFSDVTGNKIAKNVQYPECLDMQPYMSQTNTGPLVYVLYAVLVHAGWSCHNGHYFSYVKAQEGQWYKMDDAEVTASSITSVLSQQAYVLFYIQKSEWERHSESVSRGREPRALGAEDTDRRATQGELKRDHPCLQAPELDEHLVERATQESTLDHWKFLQEQNKTKPEFNVRKVEGTLPPDVLVIHQSKYKCGMKNHHPEQQSSLLNLSSTTPTHQESMNTGTLASLRGRARRSKGKNKHSKRALLVCQ.

Residues 80 to 375 (AGLQNMGNTC…QAYVLFYIQK (296 aa)) enclose the USP domain. Cysteine 89 acts as the Nucleophile in catalysis. Catalysis depends on histidine 334, which acts as the Proton acceptor. Composition is skewed to basic and acidic residues over residues 382–392 (SESVSRGREPR) and 398–413 (DTDR…RDHP). Disordered regions lie at residues 382-413 (SESV…RDHP) and 509-530 (RGRA…LVCQ). A compositionally biased stretch (basic residues) spans 510–524 (GRARRSKGKNKHSKR).

The protein belongs to the peptidase C19 family. USP17 subfamily.

The protein resides in the nucleus. It localises to the endoplasmic reticulum. It carries out the reaction Thiol-dependent hydrolysis of ester, thioester, amide, peptide and isopeptide bonds formed by the C-terminal Gly of ubiquitin (a 76-residue protein attached to proteins as an intracellular targeting signal).. In terms of biological role, deubiquitinating enzyme that removes conjugated ubiquitin from specific proteins to regulate different cellular processes that may include cell proliferation, progression through the cell cycle, apoptosis, cell migration, and the cellular response to viral infection. The protein is Ubiquitin carboxyl-terminal hydrolase 17-like protein 11 (USP17L11) of Homo sapiens (Human).